Consider the following 302-residue polypeptide: Nucleotide-binding protein Bcep1808_2900 (302 aa).

8 to 15 (GISGSGKS) lines the ATP pocket. 57 to 60 (DARS) provides a ligand contact to GTP.

Belongs to the RapZ-like family.

Its function is as follows. Displays ATPase and GTPase activities. The polypeptide is Nucleotide-binding protein Bcep1808_2900 (Burkholderia vietnamiensis (strain G4 / LMG 22486) (Burkholderia cepacia (strain R1808))).